We begin with the raw amino-acid sequence, 124 residues long: Large ribosomal subunit protein bL12 (124 aa).

The protein belongs to the bacterial ribosomal protein bL12 family. As to quaternary structure, homodimer. Part of the ribosomal stalk of the 50S ribosomal subunit. Forms a multimeric L10(L12)X complex, where L10 forms an elongated spine to which 2 to 4 L12 dimers bind in a sequential fashion. Binds GTP-bound translation factors.

Its function is as follows. Forms part of the ribosomal stalk which helps the ribosome interact with GTP-bound translation factors. Is thus essential for accurate translation. In Allorhizobium ampelinum (strain ATCC BAA-846 / DSM 112012 / S4) (Agrobacterium vitis (strain S4)), this protein is Large ribosomal subunit protein bL12.